The chain runs to 488 residues: NADH-quinone oxidoreductase subunit N 2 (488 aa).

14 consecutive transmembrane segments (helical) span residues 18–38 (FLPEFILLLLAFILFTLELFI), 45–65 (LVLNVVSYVGYFSVLMSLLIP), 81–101 (PLAVTVKIFAVLITLAILPFA), 110–130 (SFYGEFYYILAFTLLGVFVLA), 135–155 (LIILYVALELVSVGFYILTAL), 169–189 (YLILGGLSIALASYGAAFMYI), 210–230 (LVLGLVFFLIGLAVKIGAVPF), 242–262 (PTPVTALMASVGKLAFFIPLV), 274–294 (LVWTITVGVIAALTMLYGNLV), 308–328 (SSIAHSGYIMAGAAVAKVIGM), 331–351 (VIYFLVAYAVMSAGAFLVLAL), 375–395 (IAFAFFVYMVALLGVPPTVGF), 412–434 (WLAFIMILSAAISTGYYIRLVVV), and 458–478 (FALTLASVLLGVLPSLVWFLI).

It belongs to the complex I subunit 2 family. In terms of assembly, NDH-1 is composed of 14 different subunits. Subunits NuoA, H, J, K, L, M, N constitute the membrane sector of the complex.

Its subcellular location is the cell inner membrane. The catalysed reaction is a quinone + NADH + 5 H(+)(in) = a quinol + NAD(+) + 4 H(+)(out). Functionally, NDH-1 shuttles electrons from NADH, via FMN and iron-sulfur (Fe-S) centers, to quinones in the respiratory chain. The immediate electron acceptor for the enzyme in this species is believed to be ubiquinone. Couples the redox reaction to proton translocation (for every two electrons transferred, four hydrogen ions are translocated across the cytoplasmic membrane), and thus conserves the redox energy in a proton gradient. In Aquifex aeolicus (strain VF5), this protein is NADH-quinone oxidoreductase subunit N 2.